A 547-amino-acid chain; its full sequence is Cytochrome P450 78A1 (547 aa).

Residues 84 to 94 (ASSRCPGAAAP) are compositionally biased toward low complexity. Residues 84-104 (ASSRCPGAAAPRPRRDGPRRR) are disordered. Position 490 (Cys-490) interacts with heme.

The protein belongs to the cytochrome P450 family. The cofactor is heme. In terms of tissue distribution, shoot apex.

In Zea mays (Maize), this protein is Cytochrome P450 78A1 (CYP78A1).